The chain runs to 267 residues: Endonuclease NucS (267 aa).

Belongs to the NucS endonuclease family.

It localises to the cytoplasm. Functionally, cleaves both 3' and 5' ssDNA extremities of branched DNA structures. The protein is Endonuclease NucS of Pyrococcus furiosus (strain ATCC 43587 / DSM 3638 / JCM 8422 / Vc1).